We begin with the raw amino-acid sequence, 290 residues long: MEDKEGRFRVECIENVHYVTDMFCKYPLKLIAPKTKLDFSILYIMSYGGGLVSGDRVALDIIVGKNATLCIQSQGNTKLYKQIPGKPATQQKLDVEVGTNALCLLLQDPVQPFGDSNYIQTQNFVLEDETSSLALLDWTLHGRSHINEQWSMRSYVSKNCIQMKIPASNQRKTLLRDVLKIFDEPNLHIGLKAERMHHFECIGNLYLIGPKFLKTKEAVLNQYRNKEKRISKTTDSSQMKKIIWTACEIRSVTIIKFAAYNTETARNFLLKLFSDYASFLDHETLRAFWY.

The protein belongs to the UreD family.

It localises to the cytoplasm. The protein localises to the nucleus. Its function is as follows. Probably facilitates nickel incorporation. This is an uncharacterized protein from Schizosaccharomyces pombe (strain 972 / ATCC 24843) (Fission yeast).